Reading from the N-terminus, the 217-residue chain is Deoxyribose-phosphate aldolase (217 aa).

Aspartate 89 (proton donor/acceptor) is an active-site residue. Lysine 151 acts as the Schiff-base intermediate with acetaldehyde in catalysis. Catalysis depends on lysine 180, which acts as the Proton donor/acceptor.

It belongs to the DeoC/FbaB aldolase family. DeoC type 1 subfamily.

Its subcellular location is the cytoplasm. It catalyses the reaction 2-deoxy-D-ribose 5-phosphate = D-glyceraldehyde 3-phosphate + acetaldehyde. The protein operates within carbohydrate degradation; 2-deoxy-D-ribose 1-phosphate degradation; D-glyceraldehyde 3-phosphate and acetaldehyde from 2-deoxy-alpha-D-ribose 1-phosphate: step 2/2. Its function is as follows. Catalyzes a reversible aldol reaction between acetaldehyde and D-glyceraldehyde 3-phosphate to generate 2-deoxy-D-ribose 5-phosphate. In Metamycoplasma arthritidis (strain 158L3-1) (Mycoplasma arthritidis), this protein is Deoxyribose-phosphate aldolase.